Reading from the N-terminus, the 354-residue chain is UDP-N-acetylglucosamine--N-acetylmuramyl-(pentapeptide) pyrophosphoryl-undecaprenol N-acetylglucosamine transferase (354 aa).

UDP-N-acetyl-alpha-D-glucosamine-binding positions include 11 to 13 (TAG), arginine 164, serine 194, and glutamine 289.

The protein belongs to the glycosyltransferase 28 family. MurG subfamily.

The protein resides in the cell membrane. The enzyme catalyses di-trans,octa-cis-undecaprenyl diphospho-N-acetyl-alpha-D-muramoyl-L-alanyl-D-glutamyl-meso-2,6-diaminopimeloyl-D-alanyl-D-alanine + UDP-N-acetyl-alpha-D-glucosamine = di-trans,octa-cis-undecaprenyl diphospho-[N-acetyl-alpha-D-glucosaminyl-(1-&gt;4)]-N-acetyl-alpha-D-muramoyl-L-alanyl-D-glutamyl-meso-2,6-diaminopimeloyl-D-alanyl-D-alanine + UDP + H(+). It functions in the pathway cell wall biogenesis; peptidoglycan biosynthesis. Cell wall formation. Catalyzes the transfer of a GlcNAc subunit on undecaprenyl-pyrophosphoryl-MurNAc-pentapeptide (lipid intermediate I) to form undecaprenyl-pyrophosphoryl-MurNAc-(pentapeptide)GlcNAc (lipid intermediate II). This Clostridium botulinum (strain Loch Maree / Type A3) protein is UDP-N-acetylglucosamine--N-acetylmuramyl-(pentapeptide) pyrophosphoryl-undecaprenol N-acetylglucosamine transferase.